Here is a 361-residue protein sequence, read N- to C-terminus: MGFIDGKWAPMIVLIVSNMIAGMVNALVKKVLDGGINHMVIATYRLGISTLFLLPVAYFWERKTRPKLTLSISCQLFVSALFGASLMQYFYLLGLSYTSATLGSAFWAIMPSLTFVMALIFGFEKLSLKTKIGYGVVLGTLISLVGGLLLTMYQGIPLTNSPEQAANSNNHTGHENWIKGCFFLLTGVVLFSSWMLIQAKINVKYPCPYSSTVILSVFGTLQCALLSLIKTRHLEDWILRDELTIITVVIAGVVAQGMCTVGMSWCIKQQGPVVSSSFSPVVLMSATVFDFLILHREIYLGSVIGSVVVVIGLYIFLWSRSKQIVECKIMKLPTNTVEEEKEEEGRTNVNNGQLLVIPMTP.

A run of 10 helical transmembrane segments spans residues 8-28 (WAPM…NALV), 40-60 (VIAT…AYFW), 76-96 (LFVS…LGLS), 103-123 (GSAF…IFGF), 132-152 (IGYG…LLTM), 177-197 (WIKG…WMLI), 209-229 (YSST…LSLI), 243-263 (LTII…TVGM), 273-293 (VVSS…DFLI), and 298-318 (IYLG…IFLW). EamA domains follow at residues 21-142 (AGMV…GTLI) and 194-317 (WMLI…YIFL).

This sequence belongs to the drug/metabolite transporter (DMT) superfamily. Plant drug/metabolite exporter (P-DME) (TC 2.A.7.4) family.

It is found in the membrane. The protein is WAT1-related protein At4g01450 of Arabidopsis thaliana (Mouse-ear cress).